The sequence spans 550 residues: Enhanced filamentous growth protein 1 (550 aa).

Disordered stretches follow at residues 17-48, 72-95, and 123-182; these read NNGMPQQTTAANQQAFPQQQQPTTTGNASQQQ, QGQPGQQTGQTAGQQQQQQQQQQQ, and QLSQ…QPTP. Positions 123–153 are enriched in polar residues; sequence QLSQPQPQHYNGSNRNYTSAPSGAPIPSNST. 2 positions are modified to phosphothreonine: T181 and T208. Positions 206 to 312 constitute an HTH APSES-type domain; the sequence is RVTTTMWEDE…RDIKRVIQTG (107 aa). A DNA-binding region (H-T-H motif) is located at residues 240–261; sequence GTKLLNVAQMTRGRRDGILKSE. Disordered regions lie at residues 329-435 and 476-550; these read TSAS…STTN and SSYP…KEEK. Positions 342–383 are enriched in low complexity; the sequence is AAATTTAATAISKSSSGNGNSISATSGGSNVSGASGAGSTTS. Over residues 384–394 the composition is skewed to polar residues; that stretch reads PVNTKAATTAG. The span at 395–416 shows a compositional bias: low complexity; it reads TPQGNYYQTYNQQQYPQQYGQY. Residues 420-435 show a composition bias toward polar residues; that stretch reads GKNQNTPASQPGSTTN. The segment covering 476 to 502 has biased composition (low complexity); that stretch reads SSYPYQQQQQKQQQQQPNQQQQSDQQQ. The segment covering 514–544 has biased composition (polar residues); sequence SVHQSPQVQSLTQGSVHPSPQQHQANQSAST.

The protein belongs to the EFG1/PHD1/stuA family. In terms of assembly, interacts with CZF1 and FLO8. Post-translationally, thr-208 is a phosphorylation target to promote hyphal induction by a subset of environmental cues. Phosphorylation at Thr-181 by the CDc28/HGC1 complex represses cell separation genes and leads to hyphal chain formation.

It is found in the nucleus. In terms of biological role, transcriptional regulator of the switch between 2 heritable states, the white and opaque states. These 2 cell types differ in many characteristics, including cell structure, mating competence, and virulence. Each state is heritable for many generations, and switching between states occurs stochastically, at low frequency. Antagonizes the action of WOR1, WOR2 and CZF1, and promotes the white state. In white cells, EFG1 represses WOR1 indirectly through WOR2 to maintain white cell identity. Binds target gene promoters at the EFG1 recognition sequence (EGRbox) TATGCATA. Acts as a major regulator of cell wall dynamics and plays a role in interactions with extracellular matrices. Required for TOR1-dependent cellular aggregation and adhesin expression. Required for both normoxic and hypoxic biofilm formation. Hypoxic biofilm formation is a major cause of perseverance and antifungal resistance during infections. Contributes to virulence by regulating hyphal formation and the factors that enable C.albicans to invade and injure endothelial cells. Required for the formation of thick-walled big resting spores called chlamydospores, which survive in unfavorable conditions. Mediates the expression of virulence factors SAP4, SAP5and SAP6 during infection. Involved in drug resistance by regulating the expression of ERG3. The protein is Enhanced filamentous growth protein 1 (EFG1) of Candida albicans (strain SC5314 / ATCC MYA-2876) (Yeast).